The chain runs to 238 residues: Probable 2-phosphosulfolactate phosphatase (238 aa).

The protein belongs to the ComB family. Mg(2+) serves as cofactor.

It carries out the reaction (2R)-O-phospho-3-sulfolactate + H2O = (2R)-3-sulfolactate + phosphate. This is Probable 2-phosphosulfolactate phosphatase from Carboxydothermus hydrogenoformans (strain ATCC BAA-161 / DSM 6008 / Z-2901).